Consider the following 627-residue polypeptide: Zinc finger MYM-type protein 5 (627 aa).

The interval 1–23 (MEAHLADMESSGGPTSSLAGTSR) is disordered. Polar residues predominate over residues 12-23 (GGPTSSLAGTSR). A Glycyl lysine isopeptide (Lys-Gly) (interchain with G-Cter in SUMO2) cross-link involves residue K59. Residues 91 to 123 (DDEGDTDTNGGEEKNPTDFIEWGPNGNKSSTKN) form a disordered region. Residues K137 and K195 each participate in a glycyl lysine isopeptide (Lys-Gly) (interchain with G-Cter in SUMO2) cross-link. The segment at 234–268 (HLFCSTTCLSSFSHKRTRKTRNVMCKKDSPVRTTT) adopts an MYM-type 1 zinc-finger fold. The MYM-type 2; degenerate zinc finger occupies 280-319 (QGFYNASLSPYENCQSLRKEVFTKSRCIICNKLGEVRHEI). 2 MYM-type zinc fingers span residues 326 to 354 (HKLC…CSKY) and 370 to 396 (KRFC…LLQN). The segment at 405 to 429 (ENEKRLRESSGTLSGNTGDIPEKKE) is disordered. Glycyl lysine isopeptide (Lys-Gly) (interchain with G-Cter in SUMO2) cross-links involve residues K408, K427, and K517.

In terms of assembly, interacts (via N-terminal 120 amino acid region) with ETV5 (via C-terminal).

It localises to the nucleus. Functionally, functions as a transcriptional regulator. In Mus musculus (Mouse), this protein is Zinc finger MYM-type protein 5 (Zmym5).